A 433-amino-acid chain; its full sequence is Acetyl-CoA-benzylalcohol acetyltransferase (433 aa).

Catalysis depends on proton acceptor residues H152 and D377.

It belongs to the plant acyltransferase family.

The catalysed reaction is benzyl alcohol + acetyl-CoA = benzyl acetate + CoA. The enzyme catalyses (E)-cinnamyl alcohol + acetyl-CoA = (E)-cinnamyl acetate + CoA. Functionally, involved in the biosynthesis of benzyl acetate, a major constituent of the floral scent. Can use benzylalcohol, cinnamylalcohol, 3-cis-hexene-1-ol or heptanol as substrates. Has some activity with 2-phenylethanol and 2-naphtalene-ethanol. The chain is Acetyl-CoA-benzylalcohol acetyltransferase (BEAT) from Clarkia breweri (Fairy fans).